The following is a 334-amino-acid chain: Transmembrane protein 41 homolog (334 aa).

An N-linked (GlcNAc...) asparagine glycan is attached at asparagine 43. A disordered region spans residues 47-79; the sequence is KNKNNNIDNKKNSNNNNNNNNNNNNKNSISNNN. Asparagine 83 carries N-linked (GlcNAc...) asparagine glycosylation. The next 6 helical transmembrane spans lie at 97–117, 156–176, 192–214, 246–266, 269–289, and 305–325; these read LPLW…VFLF, FIVI…SIPG, VGFP…ISYY, IVFL…ASPL, VPIH…TFLA, and IFDL…ILPT.

This sequence belongs to the TMEM41 family.

Its subcellular location is the membrane. This is Transmembrane protein 41 homolog from Dictyostelium discoideum (Social amoeba).